Consider the following 371-residue polypeptide: Phospholipid-transporting ATPase accessory subunit ivn1 (371 aa).

At 1–39 (MSQTEIVKKPKHKRFKRPDKSRFVQQTLPAWQFIFTPWT) the chain is on the cytoplasmic side. The chain crosses the membrane as a helical span at residues 40 to 60 (VLPLLFLLGIVFAPLGAGMFV). The Extracellular portion of the chain corresponds to 61 to 325 (ASRRVKELRI…STTSVIGGKN (265 aa)). Cystine bridges form between cysteine 75/cysteine 111 and cysteine 166/cysteine 181. Asparagine 99 is a glycosylation site (N-linked (GlcNAc...) asparagine). Residues asparagine 190, asparagine 212, asparagine 216, asparagine 233, asparagine 284, and asparagine 297 are each glycosylated (N-linked (GlcNAc...) asparagine). The helical transmembrane segment at 326-346 (YFLGILYFVIGGLCAASGVIL) threads the bilayer. At 347–371 (SIACLIKPRRVGDPRYLSWNRGKSS) the chain is on the cytoplasmic side.

The protein belongs to the CDC50/LEM3 family.

It is found in the endoplasmic reticulum membrane. Functionally, accessory component of a P4-ATPase flippase complex which catalyzes the hydrolysis of ATP coupled to the transport of aminophospholipids from the lumenal to the cytosolic leaflet of membranes and ensures the maintenance of asymmetric distribution of phospholipids. This Schizosaccharomyces pombe (strain 972 / ATCC 24843) (Fission yeast) protein is Phospholipid-transporting ATPase accessory subunit ivn1 (ivn1).